A 271-amino-acid polypeptide reads, in one-letter code: 3-methyl-2-oxobutanoate hydroxymethyltransferase (271 aa).

The Mg(2+) site is built by D51 and D90. Residues 51–52 (DS), D90, and K118 contribute to the 3-methyl-2-oxobutanoate site. Position 120 (E120) interacts with Mg(2+). E186 serves as the catalytic Proton acceptor.

The protein belongs to the PanB family. Homodecamer; pentamer of dimers. Mg(2+) is required as a cofactor.

Its subcellular location is the cytoplasm. It carries out the reaction 3-methyl-2-oxobutanoate + (6R)-5,10-methylene-5,6,7,8-tetrahydrofolate + H2O = 2-dehydropantoate + (6S)-5,6,7,8-tetrahydrofolate. It functions in the pathway cofactor biosynthesis; (R)-pantothenate biosynthesis; (R)-pantoate from 3-methyl-2-oxobutanoate: step 1/2. Its function is as follows. Catalyzes the reversible reaction in which hydroxymethyl group from 5,10-methylenetetrahydrofolate is transferred onto alpha-ketoisovalerate to form ketopantoate. This chain is 3-methyl-2-oxobutanoate hydroxymethyltransferase, found in Xanthomonas campestris pv. campestris (strain B100).